Reading from the N-terminus, the 214-residue chain is Cell division protein B1 (214 aa).

Functionally, part of a cell division machinery. This chain is Cell division protein B1, found in Sulfolobus acidocaldarius (strain ATCC 33909 / DSM 639 / JCM 8929 / NBRC 15157 / NCIMB 11770).